We begin with the raw amino-acid sequence, 338 residues long: DNA-directed RNA polymerase subunit alpha (338 aa).

An alpha N-terminal domain (alpha-NTD) region spans residues 1 to 233; that stretch reads MYKNWRELIK…EQLQIFINFD (233 aa). The interval 250 to 338 is alpha C-terminal domain (alpha-CTD); that stretch reads INENLYRSVE…KMIQEGKEDL (89 aa).

Belongs to the RNA polymerase alpha chain family. As to quaternary structure, homodimer. The RNAP catalytic core consists of 2 alpha, 1 beta, 1 beta' and 1 omega subunit. When a sigma factor is associated with the core the holoenzyme is formed, which can initiate transcription.

It carries out the reaction RNA(n) + a ribonucleoside 5'-triphosphate = RNA(n+1) + diphosphate. Its function is as follows. DNA-dependent RNA polymerase catalyzes the transcription of DNA into RNA using the four ribonucleoside triphosphates as substrates. The chain is DNA-directed RNA polymerase subunit alpha from Syntrophotalea carbinolica (strain DSM 2380 / NBRC 103641 / GraBd1) (Pelobacter carbinolicus).